A 249-amino-acid polypeptide reads, in one-letter code: 4-hydroxy-tetrahydrodipicolinate reductase (249 aa).

NAD(+) is bound by residues 77-79 and 101-104; these read ATT and SYNT. The active-site Proton donor/acceptor is the His133. Residue His134 coordinates (S)-2,3,4,5-tetrahydrodipicolinate. Lys137 (proton donor) is an active-site residue. Position 143–144 (143–144) interacts with (S)-2,3,4,5-tetrahydrodipicolinate; that stretch reads GT.

Belongs to the DapB family.

It localises to the cytoplasm. The catalysed reaction is (S)-2,3,4,5-tetrahydrodipicolinate + NAD(+) + H2O = (2S,4S)-4-hydroxy-2,3,4,5-tetrahydrodipicolinate + NADH + H(+). The enzyme catalyses (S)-2,3,4,5-tetrahydrodipicolinate + NADP(+) + H2O = (2S,4S)-4-hydroxy-2,3,4,5-tetrahydrodipicolinate + NADPH + H(+). Its pathway is amino-acid biosynthesis; L-lysine biosynthesis via DAP pathway; (S)-tetrahydrodipicolinate from L-aspartate: step 4/4. Its function is as follows. Catalyzes the conversion of 4-hydroxy-tetrahydrodipicolinate (HTPA) to tetrahydrodipicolinate. The chain is 4-hydroxy-tetrahydrodipicolinate reductase from Exiguobacterium sp. (strain ATCC BAA-1283 / AT1b).